The sequence spans 495 residues: Mesoderm induction early response protein 1 (495 aa).

Disordered stretches follow at residues 1–25 (MAEP…FEPS) and 76–131 (GSTV…PSFT). A compositionally biased stretch (acidic residues) spans 83–94 (GEEEEDEEDMDN). Polar residues predominate over residues 120-130 (QSSNDDPTPSF). In terms of domain architecture, ELM2 spans 171 to 269 (KEIMVGSMFQ…EALRRLRFNV (99 aa)). The SANT domain occupies 274 to 326 (EELSVWTEEECRNFEQGLKAYGKDFHLIQANKVRTRSVGECVAFYYMWKKSER). 2 disordered regions span residues 356–397 (DESE…NGVS) and 416–495 (HLNG…HGEV). Polar residues-rich tracts occupy residues 387–397 (TASNNTQNGVS) and 420–440 (PTIS…YNRE). Residues 462–476 (TNERPIKRQRMDSPG) are compositionally biased toward basic and acidic residues. Over residues 477–489 (KESTGSSEFSQEV) the composition is skewed to polar residues.

It is found in the nucleus. Transcriptional repressor regulating the expression of a number of genes. Probably functions through recruitment of histone deacetylases involved in chromatin silencing. This Xenopus laevis (African clawed frog) protein is Mesoderm induction early response protein 1 (mier1).